The sequence spans 256 residues: Probable hydroxyacylglutathione hydrolase SPCC13B11.03c (256 aa).

Residues His63, His65, Asp67, His68, His118, and Asp139 each coordinate Zn(2+). Substrate is bound by residues 148-150, 178-180, and 250-253; these read RFF, HEY, and RTLK. His178 lines the Zn(2+) pocket.

The protein belongs to the metallo-beta-lactamase superfamily. Glyoxalase II family. It depends on Zn(2+) as a cofactor.

It is found in the cytoplasm. Its subcellular location is the nucleus. The catalysed reaction is an S-(2-hydroxyacyl)glutathione + H2O = a 2-hydroxy carboxylate + glutathione + H(+). The enzyme catalyses (R)-S-lactoylglutathione + H2O = (R)-lactate + glutathione + H(+). It functions in the pathway secondary metabolite metabolism; methylglyoxal degradation; (R)-lactate from methylglyoxal: step 2/2. Thiolesterase that catalyzes the hydrolysis of S-D-lactoylglutathione to form glutathione and D-lactic acid. Involved in the metabolism of methylglyoxal, a toxic compound for yeast proliferation, by converting methylglyoxal to lactate via S-D-lactoylglutathione by sequential enzyme reactions catalyzed by glyoxalase I and glyoxalase II. In Schizosaccharomyces pombe (strain 972 / ATCC 24843) (Fission yeast), this protein is Probable hydroxyacylglutathione hydrolase SPCC13B11.03c.